A 119-amino-acid chain; its full sequence is Large ribosomal subunit protein bL20 (119 aa).

It belongs to the bacterial ribosomal protein bL20 family.

Its function is as follows. Binds directly to 23S ribosomal RNA and is necessary for the in vitro assembly process of the 50S ribosomal subunit. It is not involved in the protein synthesizing functions of that subunit. This Verminephrobacter eiseniae (strain EF01-2) protein is Large ribosomal subunit protein bL20.